The chain runs to 464 residues: Probable acid phosphatase DDB_G0284753 (464 aa).

A disordered region spans residues 1-29 (MFSYFRKSQQKVEENQNGGGGDGRGSGIK). The span at 17-26 (NGGGGDGRGS) shows a compositional bias: gly residues. Catalysis depends on H81, which acts as the Nucleophile. The interval 180–202 (SFTDEQEKSPHHSSFLVKPDNEE) is disordered. The active-site Proton donor is D347.

This sequence belongs to the histidine acid phosphatase family.

The catalysed reaction is a phosphate monoester + H2O = an alcohol + phosphate. The protein is Probable acid phosphatase DDB_G0284753 of Dictyostelium discoideum (Social amoeba).